A 213-amino-acid polypeptide reads, in one-letter code: Phosphatidylserine decarboxylase proenzyme (213 aa).

Serine 182 functions as the Schiff-base intermediate with substrate; via pyruvic acid in the catalytic mechanism. At serine 182 the chain carries Pyruvic acid (Ser); by autocatalysis.

Belongs to the phosphatidylserine decarboxylase family. PSD-A subfamily. Heterodimer of a large membrane-associated beta subunit and a small pyruvoyl-containing alpha subunit. Pyruvate is required as a cofactor. In terms of processing, is synthesized initially as an inactive proenzyme. Formation of the active enzyme involves a self-maturation process in which the active site pyruvoyl group is generated from an internal serine residue via an autocatalytic post-translational modification. Two non-identical subunits are generated from the proenzyme in this reaction, and the pyruvate is formed at the N-terminus of the alpha chain, which is derived from the carboxyl end of the proenzyme. The post-translation cleavage follows an unusual pathway, termed non-hydrolytic serinolysis, in which the side chain hydroxyl group of the serine supplies its oxygen atom to form the C-terminus of the beta chain, while the remainder of the serine residue undergoes an oxidative deamination to produce ammonia and the pyruvoyl prosthetic group on the alpha chain.

Its subcellular location is the cell membrane. The catalysed reaction is a 1,2-diacyl-sn-glycero-3-phospho-L-serine + H(+) = a 1,2-diacyl-sn-glycero-3-phosphoethanolamine + CO2. It functions in the pathway phospholipid metabolism; phosphatidylethanolamine biosynthesis; phosphatidylethanolamine from CDP-diacylglycerol: step 2/2. In terms of biological role, catalyzes the formation of phosphatidylethanolamine (PtdEtn) from phosphatidylserine (PtdSer). This is Phosphatidylserine decarboxylase proenzyme from Geotalea uraniireducens (strain Rf4) (Geobacter uraniireducens).